A 348-amino-acid polypeptide reads, in one-letter code: Rhodopsin (348 aa).

An N-acetylmethionine modification is found at Met-1. The Extracellular portion of the chain corresponds to 1-36 (MNGTEGLNFYVPFSNKTGVVRSPFEYPQYYLAEPWQ). 2 N-linked (GlcNAc...) asparagine glycosylation sites follow: Asn-2 and Asn-15. The helical transmembrane segment at 37–61 (FSVLAAYMFLLIVLGFPINFLTLYV) threads the bilayer. Topologically, residues 62–73 (TVQHKKLRTPLN) are cytoplasmic. Residues 74–96 (YIPLNLAVANLFMVFGGFTTTLY) form a helical membrane-spanning segment. Over 97–110 (TSLHAYFVFGPTGC) the chain is Extracellular. Cysteines 110 and 187 form a disulfide. Residues 111-133 (NLEGFFATLGGEIALWSLVVLAI) form a helical membrane-spanning segment. The 'Ionic lock' involved in activated form stabilization motif lies at 134 to 136 (ERY). At 134-152 (ERYVVVCKPMSNFRFGENH) the chain is on the cytoplasmic side. The chain crosses the membrane as a helical span at residues 153–173 (AIMGLALTWVMAMACAAPPLV). The Extracellular segment spans residues 174–202 (GWSRYIPEGMQCSCGIDYYTSRQEVNNES). Glu-201 is a Zn(2+) binding site. A helical transmembrane segment spans residues 203-224 (FVIYMFVVHFTIPLVIIFFCYG). Residues 225 to 252 (QLVFTVKEAAAQQQESATTQKAEKEVTR) are Cytoplasmic-facing. The helical transmembrane segment at 253–274 (MVIIMVVAFLICWVPYASVAFY) threads the bilayer. The Extracellular portion of the chain corresponds to 275–286 (IFTHQGSDFGPI). A Zn(2+)-binding site is contributed by Gln-279. The chain crosses the membrane as a helical span at residues 287 to 308 (FMTIPSFFAKSSSIYNPVIYIM). Lys-296 carries the post-translational modification N6-(retinylidene)lysine. Topologically, residues 309 to 348 (MNKQLRNCMLTTLCCGRNPLGDDEASTTASKTETSQVAPA) are cytoplasmic. Residues Cys-322 and Cys-323 are each lipidated (S-palmitoyl cysteine). The interval 330–348 (DDEASTTASKTETSQVAPA) is interaction with SAG. At Ser-334 the chain carries Phosphoserine. Phosphothreonine occurs at positions 335 and 336. Ser-338 is subject to Phosphoserine. Phosphothreonine is present on residues Thr-340 and Thr-342. Ser-343 bears the Phosphoserine mark.

The protein belongs to the G-protein coupled receptor 1 family. Opsin subfamily. Homodimer. May form a complex composed of RHO, GRK1 and RCVRN in a Ca(2+)-dependent manner; RCVRN prevents the interaction between GRK1 and RHO. Interacts with GRK1. Interacts (phosphorylated form) with SAG. Interacts with GNAT1. Interacts with GNAT3. SAG and G-proteins compete for a common binding site. Interacts with PRCD; the interaction promotes PRCD stability. Forms a complex with ASAP1 and ARF4. Forms a complex with ASAP1, RAB11A, Rabin8/RAB3IP, ARF4 and RAB11FIP3; the complex regulates Golgi-to-cilia rhodopsin/RHO transport in photoreceptors. Post-translationally, phosphorylated on some or all of the serine and threonine residues present in the C-terminal region. Contains one covalently linked retinal chromophore. Upon light absorption, the covalently bound 11-cis-retinal is converted to all-trans-retinal. After hydrolysis of the Schiff base and release of the covalently bound all-trans-retinal, active rhodopsin is regenerated by binding of a fresh molecule of 11-cis-retinal.

The protein resides in the membrane. It localises to the cell projection. It is found in the cilium. The protein localises to the photoreceptor outer segment. Functionally, photoreceptor required for image-forming vision at low light intensity. Required for photoreceptor cell viability after birth. Light-induced isomerization of 11-cis to all-trans retinal triggers a conformational change that activates signaling via G-proteins. Subsequent receptor phosphorylation mediates displacement of the bound G-protein alpha subunit by the arrestin SAG and terminates signaling. This is Rhodopsin (RHO) from Globicephala melas (Long-finned pilot whale).